Here is a 297-residue protein sequence, read N- to C-terminus: XIAP-associated factor 1 (297 aa).

A TRAF-type zinc finger spans residues 22-99; that stretch reads LHEAHCLMYL…QLAVRLNKVD (78 aa). Residues 178–255 form a disordered region; that stretch reads AVTPSPVGKP…NGKLRASSPV (78 aa). Residues 202–212 show a composition bias toward basic and acidic residues; it reads QTSKAEKDVRP. Over residues 229–245 the composition is skewed to polar residues; it reads RQAPRGTNKTTNLSLKS.

Interacts with BIRC1, BIRC2, BIRC3, BIRC4, BIRC7 and BIRC8. Part of an complex consisting of BIRC4, XAF1 and BIRC5; the complex formation requires IFN-beta stimulation. Interacts with RNF114, the interaction increases XAF1 stability and proapoptotic effects, and may regulate IFN signaling.

The protein resides in the cytoplasm. The protein localises to the nucleus. Its subcellular location is the mitochondrion. Functionally, seems to function as a negative regulator of members of the IAP (inhibitor of apoptosis protein) family. Inhibits anti-caspase activity of BIRC4. Induces cleavage and inactivation of BIRC4 independent of caspase activation. Mediates TNF-alpha-induced apoptosis and is involved in apoptosis in trophoblast cells. May inhibit BIRC4 indirectly by activating the mitochondrial apoptosis pathway. After translocation to mitochondria, promotes translocation of BAX to mitochondria and cytochrome c release from mitochondria. Seems to promote the redistribution of BIRC4 from the cytoplasm to the nucleus, probably independent of BIRC4 inactivation which seems to occur in the cytoplasm. The BIRC4-XAF1 complex mediates down-regulation of BIRC5/survivin; the process requires the E3 ligase activity of BIRC4. Seems to be involved in cellular sensitivity to the proapoptotic actions of TRAIL. May be a tumor suppressor by mediating apoptosis resistance of cancer cells. The protein is XIAP-associated factor 1 (XAF1) of Bos taurus (Bovine).